We begin with the raw amino-acid sequence, 144 residues long: Dynein light chain Tctex-type protein 2B (144 aa).

Belongs to the dynein light chain Tctex-type family. Light chain of the cytoplasmic dynein complex 2, a multisubunit complex composed at least of eleven different proteins. The cytoplasmic dynein 2 complex consists of two catalytic heavy chains (HCs) and a number of non-catalytic subunits presented by intermediate chains (ICs), light intermediate chains (LICs) and light chains (LCs). Among them, a heavy chain (DYNC2H1), two intermediate chains (DYNC2I2 and DYNC2I1), a light intermediate chain (DYNC2LI1), and a light chain (DYNLT2B) are unique to the dynein-2 complex, but a subset of the light chains are also shared by dynein-1 and dynein-2 complexes. The dimer DYNLT2B-DYNLT1/DYNLT3 interacts with DYNC2I1; this interaction is crucial for retrograde trafficking of ciliary proteins.

It is found in the dynein axonemal particle. Its function is as follows. Acts as one of several non-catalytic accessory components of the cytoplasmic dynein 2 complex (dynein-2 complex), a motor protein complex that drives the movement of cargos along microtubules within cilia and flagella in concert with the intraflagellar transport (IFT) system. Required for proper retrograde ciliary transport. The polypeptide is Dynein light chain Tctex-type protein 2B (Dynlt2b) (Mus musculus (Mouse)).